Consider the following 636-residue polypeptide: MEKYSAESIKVLKGLEPVRMRPGMYIGSTGKRGLHHLVYEVVDNSVDEALAGYCDWIRVTLHEDGSVEVEDNGRGIPVDIHPEEGRSALEVVFTVLHAGGKFSKDSYKISGGLHGVGVSVVNALSEWLEVRVHRDGKIYRQRYERGKPVTPVEVIGETDKHGTIVRFKPDPLIFSETEFDPDILEHRLREIAFLVPGLKIEFEDRINGEKKTFKFDGGIVEYVKYLNRGKKALHDVIHIKRTEKVKTKNGEDEVIVEIAFQYTDSYSEDIVSFANTIKTVDGGTHVTAFKSTLTRLMNEYGKKHNFLKKDDSFQGEDVREGLTAVISVYVKNPEFEGQTKSKLGNEEVKEAVTKAMREELKKIFDANPELVKTILSKIMSTKQAREAAKRAREMVRRKNVLQNTTLPGKLADCSSTHREKTELFIVEGDSAGGSAKQARDREFQAVLPIRGKILNVEKSSLDRLLKNEQISDIIVAVGTGIGDDFDESKLRYGRIIIMTDADIDGAHIRTLLLTLFYRYMRPLIEQGRVYIALPPLYRIKAGREEFYVYSDQELAEYKEKLQGKRIEIQRYKGLGEMNPEQLWETTMNPETRKIIRVTIEDAEEADRLFEILMGNDPSSRREFIERHALKVKELDI.

Residues 421-535 enclose the Toprim domain; that stretch reads TELFIVEGDS…QGRVYIALPP (115 aa). Residues Glu-427, Asp-500, and Asp-502 each contribute to the Mg(2+) site.

The protein belongs to the type II topoisomerase GyrB family. Heterotetramer, composed of two GyrA and two GyrB chains. In the heterotetramer, GyrA contains the active site tyrosine that forms a transient covalent intermediate with DNA, while GyrB binds cofactors and catalyzes ATP hydrolysis. The cofactor is Mg(2+). Mn(2+) serves as cofactor. Ca(2+) is required as a cofactor.

The protein localises to the cytoplasm. The catalysed reaction is ATP-dependent breakage, passage and rejoining of double-stranded DNA.. A type II topoisomerase that negatively supercoils closed circular double-stranded (ds) DNA in an ATP-dependent manner to modulate DNA topology and maintain chromosomes in an underwound state. Negative supercoiling favors strand separation, and DNA replication, transcription, recombination and repair, all of which involve strand separation. Also able to catalyze the interconversion of other topological isomers of dsDNA rings, including catenanes and knotted rings. Type II topoisomerases break and join 2 DNA strands simultaneously in an ATP-dependent manner. This chain is DNA gyrase subunit B, found in Thermotoga maritima (strain ATCC 43589 / DSM 3109 / JCM 10099 / NBRC 100826 / MSB8).